The following is a 460-amino-acid chain: Glutamate--tRNA ligase 2 (460 aa).

A 'HIGH' region motif is present at residues 8 to 18; sequence PSPTGFLHVGG. A 'KMSKS' region motif is present at residues 237–241; that stretch reads KLSKR. An ATP-binding site is contributed by Lys-240.

This sequence belongs to the class-I aminoacyl-tRNA synthetase family. Glutamate--tRNA ligase type 1 subfamily. Monomer.

It is found in the cytoplasm. The enzyme catalyses tRNA(Glu) + L-glutamate + ATP = L-glutamyl-tRNA(Glu) + AMP + diphosphate. Its function is as follows. Catalyzes the attachment of glutamate to tRNA(Glu) in a two-step reaction: glutamate is first activated by ATP to form Glu-AMP and then transferred to the acceptor end of tRNA(Glu). This Campylobacter fetus subsp. fetus (strain 82-40) protein is Glutamate--tRNA ligase 2.